Reading from the N-terminus, the 429-residue chain is Cyclin-B2-1 (429 aa).

It belongs to the cyclin family. Cyclin AB subfamily. In terms of assembly, interacts with CDC20-1 and CDC20-2. Expressed in roots, stems, leaves, flowers and siliques.

In Arabidopsis thaliana (Mouse-ear cress), this protein is Cyclin-B2-1 (CYCB2-1).